The chain runs to 383 residues: Succinyl-diaminopimelate desuccinylase (383 aa).

Position 73 (histidine 73) interacts with Zn(2+). Residue aspartate 75 is part of the active site. Zn(2+) is bound at residue aspartate 107. Glutamate 141 serves as the catalytic Proton acceptor. Zn(2+) contacts are provided by glutamate 142, glutamate 170, and histidine 356.

The protein belongs to the peptidase M20A family. DapE subfamily. As to quaternary structure, homodimer. Zn(2+) is required as a cofactor. The cofactor is Co(2+).

It carries out the reaction N-succinyl-(2S,6S)-2,6-diaminopimelate + H2O = (2S,6S)-2,6-diaminopimelate + succinate. It participates in amino-acid biosynthesis; L-lysine biosynthesis via DAP pathway; LL-2,6-diaminopimelate from (S)-tetrahydrodipicolinate (succinylase route): step 3/3. Its function is as follows. Catalyzes the hydrolysis of N-succinyl-L,L-diaminopimelic acid (SDAP), forming succinate and LL-2,6-diaminopimelate (DAP), an intermediate involved in the bacterial biosynthesis of lysine and meso-diaminopimelic acid, an essential component of bacterial cell walls. The polypeptide is Succinyl-diaminopimelate desuccinylase (Pseudomonas entomophila (strain L48)).